The sequence spans 348 residues: Protein RecA (348 aa).

An ATP-binding site is contributed by 65 to 72 (GPESSGKT). A disordered region spans residues 328–348 (SKPQAETSARLATQEELADDY).

The protein belongs to the RecA family.

It is found in the cytoplasm. Functionally, can catalyze the hydrolysis of ATP in the presence of single-stranded DNA, the ATP-dependent uptake of single-stranded DNA by duplex DNA, and the ATP-dependent hybridization of homologous single-stranded DNAs. It interacts with LexA causing its activation and leading to its autocatalytic cleavage. The protein is Protein RecA of Ectopseudomonas oleovorans (Pseudomonas oleovorans).